Reading from the N-terminus, the 434-residue chain is Protein maelstrom homolog (434 aa).

The segment at residues 4–73 (RRASRNAYYF…AQGKDSGPSE (70 aa)) is a DNA-binding region (HMG box).

Belongs to the maelstrom family. Interacts with SMARCB1, SIN3B and DDX4. Interacts with piRNA-associated proteins TDRD1, PIWIL1 and PIWIL2. Interacts with Tex19.1 and, probably, Tex19.2. As to expression, testis-specific. Present in spermatocytes and round and early elongating spermatids.

The protein localises to the cytoplasm. Its subcellular location is the nucleus. Its function is as follows. Plays a central role during spermatogenesis by repressing transposable elements and preventing their mobilization, which is essential for the germline integrity. Acts via the piRNA metabolic process, which mediates the repression of transposable elements during meiosis by forming complexes composed of piRNAs and Piwi proteins and governs the methylation and subsequent repression of transposons. Its association with piP-bodies suggests a participation in the secondary piRNAs metabolic process. Required for the localization of germ-cell factors to the meiotic nuage. The chain is Protein maelstrom homolog from Mus musculus (Mouse).